Reading from the N-terminus, the 448-residue chain is Probable glucuronoxylan glucuronosyltransferase IRX7 (448 aa).

Residues 1–16 lie on the Cytoplasmic side of the membrane; the sequence is MTTHKHRRTEKNLCFK. The chain crosses the membrane as a helical; Signal-anchor for type II membrane protein span at residues 17–37; that stretch reads QYYKWILCFILTLYFFASFFV. Residues 38–448 lie on the Lumenal side of the membrane; sequence DHDQDHRSST…RSVRRSNSFL (411 aa). 5 N-linked (GlcNAc...) asparagine glycosylation sites follow: N157, N189, N287, N397, and N438.

The protein belongs to the glycosyltransferase 47 family. As to expression, expressed in developing interfascicular fibers and xylem cells in stems and developing secondary xylem in roots.

It localises to the golgi apparatus membrane. Its function is as follows. Involved in the synthesis of the hemicellulose glucuronoxylan, a major component of secondary cell walls. Probably involved in the synthesis of the glycosyl sequence at the glucuronoxylan reducing end. This chain is Probable glucuronoxylan glucuronosyltransferase IRX7 (IRX7), found in Arabidopsis thaliana (Mouse-ear cress).